The sequence spans 151 residues: UPF0208 membrane protein YPDSF_1972 (151 aa).

Helical transmembrane passes span 46–66 and 69–89; these read FGIRFMPPLAIFTLTWQIALG and LGPAIATALFACGLPLQGLWW.

The protein belongs to the UPF0208 family.

The protein localises to the cell inner membrane. The polypeptide is UPF0208 membrane protein YPDSF_1972 (Yersinia pestis (strain Pestoides F)).